A 403-amino-acid chain; its full sequence is MGRAKKVVLAYSGGVDTSVCIPYLKQEWGVEDVITFAADLGQGDELEPIRQKALDAGASQSLVGDLIEPFIKDFAFPAIRANALYEGRYPLSTALARPLIAKRLVEVAREVGADAVAHGCTGKGNDQVRFDVAIAALAPDLKVLTPAREWGMSREETIAYGERFGLPAPVSKKSPYSIDLNLLGRSIEAGPLEDPMVAPPEEVFAMTRSVEAAPDASEEIEIAFEAGNPVGINGQKLDPVALIREANRLAGIHGIGRLDMIENRVVGIKSREIYETPGLLLFIQAHQELESLTLAADVLRSKRQLEMQWADLVYQGLWFGPLKDALDGFMDRTQATVNGVVRLRLHKGTATVTGRGSADSSLYVPEMASYGSEDQFDHRAAEGFIYVWGLPTRLWSASQRRSS.

ATP is bound by residues 10 to 18 and Ala38; that span reads AYSGGVDTS. Tyr89 is a binding site for L-citrulline. Gly119 serves as a coordination point for ATP. L-aspartate contacts are provided by Thr121, Asn125, and Asp126. An L-citrulline-binding site is contributed by Asn125. Arg129, Ser177, Ser186, Glu262, and Tyr274 together coordinate L-citrulline.

Belongs to the argininosuccinate synthase family. Type 1 subfamily. Homotetramer.

It is found in the cytoplasm. It carries out the reaction L-citrulline + L-aspartate + ATP = 2-(N(omega)-L-arginino)succinate + AMP + diphosphate + H(+). It participates in amino-acid biosynthesis; L-arginine biosynthesis; L-arginine from L-ornithine and carbamoyl phosphate: step 2/3. This chain is Argininosuccinate synthase, found in Synechococcus sp. (strain CC9605).